Reading from the N-terminus, the 318-residue chain is Transaldolase (318 aa).

K132 (schiff-base intermediate with substrate) is an active-site residue.

Belongs to the transaldolase family. Type 1 subfamily. In terms of assembly, homodimer.

The protein localises to the cytoplasm. The enzyme catalyses D-sedoheptulose 7-phosphate + D-glyceraldehyde 3-phosphate = D-erythrose 4-phosphate + beta-D-fructose 6-phosphate. The protein operates within carbohydrate degradation; pentose phosphate pathway; D-glyceraldehyde 3-phosphate and beta-D-fructose 6-phosphate from D-ribose 5-phosphate and D-xylulose 5-phosphate (non-oxidative stage): step 2/3. In terms of biological role, transaldolase is important for the balance of metabolites in the pentose-phosphate pathway. This chain is Transaldolase, found in Shewanella sediminis (strain HAW-EB3).